The chain runs to 70 residues: ATP synthase subunit c (70 aa).

2 consecutive transmembrane segments (helical) span residues 4–24 (IAAG…NGML) and 48–68 (ISMA…FVLI).

Belongs to the ATPase C chain family. In terms of assembly, F-type ATPases have 2 components, F(1) - the catalytic core - and F(0) - the membrane proton channel. F(1) has five subunits: alpha(3), beta(3), gamma(1), delta(1), epsilon(1). F(0) has three main subunits: a(1), b(2) and c(10-14). The alpha and beta chains form an alternating ring which encloses part of the gamma chain. F(1) is attached to F(0) by a central stalk formed by the gamma and epsilon chains, while a peripheral stalk is formed by the delta and b chains.

The protein resides in the cell membrane. F(1)F(0) ATP synthase produces ATP from ADP in the presence of a proton or sodium gradient. F-type ATPases consist of two structural domains, F(1) containing the extramembraneous catalytic core and F(0) containing the membrane proton channel, linked together by a central stalk and a peripheral stalk. During catalysis, ATP synthesis in the catalytic domain of F(1) is coupled via a rotary mechanism of the central stalk subunits to proton translocation. Its function is as follows. Key component of the F(0) channel; it plays a direct role in translocation across the membrane. A homomeric c-ring of between 10-14 subunits forms the central stalk rotor element with the F(1) delta and epsilon subunits. The polypeptide is ATP synthase subunit c (Oenococcus oeni (strain ATCC BAA-331 / PSU-1)).